The primary structure comprises 426 residues: Serine--tRNA ligase (426 aa).

231 to 233 (TAE) is an L-serine binding site. Residue 262–264 (RSE) participates in ATP binding. Glutamate 285 lines the L-serine pocket. 349 to 352 (EISS) is an ATP binding site. Position 385 (serine 385) interacts with L-serine.

This sequence belongs to the class-II aminoacyl-tRNA synthetase family. Type-1 seryl-tRNA synthetase subfamily. Homodimer. The tRNA molecule binds across the dimer.

It is found in the cytoplasm. The catalysed reaction is tRNA(Ser) + L-serine + ATP = L-seryl-tRNA(Ser) + AMP + diphosphate + H(+). It catalyses the reaction tRNA(Sec) + L-serine + ATP = L-seryl-tRNA(Sec) + AMP + diphosphate + H(+). It participates in aminoacyl-tRNA biosynthesis; selenocysteinyl-tRNA(Sec) biosynthesis; L-seryl-tRNA(Sec) from L-serine and tRNA(Sec): step 1/1. Catalyzes the attachment of serine to tRNA(Ser). Is also able to aminoacylate tRNA(Sec) with serine, to form the misacylated tRNA L-seryl-tRNA(Sec), which will be further converted into selenocysteinyl-tRNA(Sec). In Saccharophagus degradans (strain 2-40 / ATCC 43961 / DSM 17024), this protein is Serine--tRNA ligase.